The primary structure comprises 413 residues: RING-H2 finger protein ATL54 (413 aa).

The chain crosses the membrane as a helical span at residues 83–103 (ISIITITGAVLAILLTGFFLV). The RING-type; atypical zinc-finger motif lies at 177 to 219 (CPVCLNEFEEDESLRLLPKCNHAFHISCIDTWLSSHTNCPLCR). Disordered stretches follow at residues 238–258 (VTPGGSGSHLENDGVDEEDHG) and 321–413 (THVE…VFPL). Positions 387–401 (SSSTLKTNGSSSSVS) are enriched in low complexity. The span at 402 to 413 (CFNKNKSSVFPL) shows a compositional bias: polar residues.

This sequence belongs to the RING-type zinc finger family. ATL subfamily.

The protein localises to the membrane. The enzyme catalyses S-ubiquitinyl-[E2 ubiquitin-conjugating enzyme]-L-cysteine + [acceptor protein]-L-lysine = [E2 ubiquitin-conjugating enzyme]-L-cysteine + N(6)-ubiquitinyl-[acceptor protein]-L-lysine.. Its pathway is protein modification; protein ubiquitination. This is RING-H2 finger protein ATL54 (ATL54) from Arabidopsis thaliana (Mouse-ear cress).